Consider the following 309-residue polypeptide: Olfactory receptor 1L8 (309 aa).

The Extracellular segment spans residues M1 to K26. An N-linked (GlcNAc...) asparagine glycan is attached at N5. Residues T27–I50 traverse the membrane as a helical segment. Residues R51–T58 are Cytoplasmic-facing. A helical membrane pass occupies residues P59–P80. At K81–Q101 the chain is on the extracellular side. Cysteines 98 and 190 form a disulfide. The chain crosses the membrane as a helical span at residues M102–F121. The Cytoplasmic portion of the chain corresponds to D122–H140. A helical transmembrane segment spans residues H141 to L159. Topologically, residues H160 to E197 are extracellular. A helical transmembrane segment spans residues I198–I220. Over R221–K237 the chain is Cytoplasmic. A helical transmembrane segment spans residues A238–Y260. The Extracellular segment spans residues L261 to H272. A helical membrane pass occupies residues V273–L292. Residues R293–S309 lie on the Cytoplasmic side of the membrane.

The protein belongs to the G-protein coupled receptor 1 family.

The protein localises to the cell membrane. In terms of biological role, odorant receptor. This chain is Olfactory receptor 1L8 (OR1L8), found in Homo sapiens (Human).